Consider the following 270-residue polypeptide: MLTPSSIADCWHSLRQQRPLVHVVPNLVTANDLANALLAVGAAPIMAIEPAEFSQLPNRALVLSMGTPTIDRMQLLAQAGRAAQAKNLPIVLDPVGVGATVWRKQAALALIATVQPTILRLNLGEALALLDQTGVAHGVDVGHAWHDPRLVAGQLARRYGCVVGLTGVIDVVSDGMNWIQLEHGHQWLSQITGAGCIVTSLIGALAAVINDVMLATVSAIAGFGMAAEVAAMHALGPASFRVALFDQLGAIAELIDNSRLSYRMEQHDAD.

Substrate is bound at residue Met-46. Residues Arg-120 and Thr-166 each contribute to the ATP site. Gly-193 serves as a coordination point for substrate.

This sequence belongs to the Thz kinase family. Mg(2+) serves as cofactor.

The catalysed reaction is 5-(2-hydroxyethyl)-4-methylthiazole + ATP = 4-methyl-5-(2-phosphooxyethyl)-thiazole + ADP + H(+). It participates in cofactor biosynthesis; thiamine diphosphate biosynthesis; 4-methyl-5-(2-phosphoethyl)-thiazole from 5-(2-hydroxyethyl)-4-methylthiazole: step 1/1. Functionally, catalyzes the phosphorylation of the hydroxyl group of 4-methyl-5-beta-hydroxyethylthiazole (THZ). The polypeptide is Hydroxyethylthiazole kinase (Herpetosiphon aurantiacus (strain ATCC 23779 / DSM 785 / 114-95)).